The primary structure comprises 219 residues: Sugar transporter SWEET1 (219 aa).

The next 7 helical transmembrane spans lie at 3-23 (FLQL…TTGL), 38-58 (VQFL…YYGL), 63-83 (GTVI…IATY), 98-118 (LLMV…ISPG), 125-145 (LGLT…ADLL), 156-176 (LSFS…LYGL), and 189-209 (PGIF…AVIP). The MtN3/slv 1 domain maps to 5-90 (QLLSCACIIF…ATYCHYTKEK (86 aa)). The MtN3/slv 2 domain occupies 124–204 (QLGLTCSVFT…LIRFFLFWWF (81 aa)).

Belongs to the SWEET sugar transporter family.

The protein localises to the golgi apparatus membrane. Its subcellular location is the cell membrane. Its function is as follows. Mediates sugar transport across membranes. This is Sugar transporter SWEET1 (slc50a1) from Danio rerio (Zebrafish).